A 508-amino-acid polypeptide reads, in one-letter code: uncharacterized protein (508 aa).

Its subcellular location is the virion. This is an uncharacterized protein from Acanthamoeba polyphaga mimivirus (APMV).